Consider the following 365-residue polypeptide: Mannonate dehydratase 1 (365 aa).

This sequence belongs to the mannonate dehydratase family. Fe(2+) serves as cofactor. The cofactor is Mn(2+).

It catalyses the reaction D-mannonate = 2-dehydro-3-deoxy-D-gluconate + H2O. It participates in carbohydrate metabolism; pentose and glucuronate interconversion. Functionally, catalyzes the dehydration of D-mannonate. In Bacillus licheniformis (strain ATCC 14580 / DSM 13 / JCM 2505 / CCUG 7422 / NBRC 12200 / NCIMB 9375 / NCTC 10341 / NRRL NRS-1264 / Gibson 46), this protein is Mannonate dehydratase 1.